Here is a 368-residue protein sequence, read N- to C-terminus: Polymerase delta-interacting protein 2 (368 aa).

The transit peptide at 1–21 directs the protein to the mitochondrion; that stretch reads MAGCVARRALAVGSRWWSRSL. One can recognise an ApaG domain in the interval 235–360; that stretch reads RETTENIRVT…FSLESNKDEK (126 aa). Residue Thr292 is modified to Phosphothreonine.

As to quaternary structure, interacts with PCNA and POLD2. Interacts with SSBP1. Interacts with PRIMPOL; leading to enhance DNA polymerase activity of PRIMPOL. Interacts with POLH. Interacts with POLD1; leading to stimulate DNA polymerase activity of POLD1.

The protein resides in the mitochondrion matrix. It is found in the nucleus. In terms of biological role, involved in DNA damage tolerance by regulating translesion synthesis (TLS) of templates carrying DNA damage lesions such as 8oxoG and abasic sites. May act by stimulating activity of DNA polymerases involved in TLS, such as PRIMPOL and polymerase delta (POLD1). The polypeptide is Polymerase delta-interacting protein 2 (Mus musculus (Mouse)).